Consider the following 266-residue polypeptide: Thymidylate synthase (266 aa).

Arg24 contributes to the dUMP binding site. His54 serves as a coordination point for (6R)-5,10-methylene-5,6,7,8-tetrahydrofolate. Residue 129–130 participates in dUMP binding; the sequence is RR. The active-site Nucleophile is the Cys149. Residues 169-172, Asn180, and 210-212 each bind dUMP; these read RSAD and HIY. A (6R)-5,10-methylene-5,6,7,8-tetrahydrofolate-binding site is contributed by Asp172. Ala265 contributes to the (6R)-5,10-methylene-5,6,7,8-tetrahydrofolate binding site.

Belongs to the thymidylate synthase family. Bacterial-type ThyA subfamily. As to quaternary structure, homodimer.

The protein localises to the cytoplasm. It carries out the reaction dUMP + (6R)-5,10-methylene-5,6,7,8-tetrahydrofolate = 7,8-dihydrofolate + dTMP. The protein operates within pyrimidine metabolism; dTTP biosynthesis. Its function is as follows. Catalyzes the reductive methylation of 2'-deoxyuridine-5'-monophosphate (dUMP) to 2'-deoxythymidine-5'-monophosphate (dTMP) while utilizing 5,10-methylenetetrahydrofolate (mTHF) as the methyl donor and reductant in the reaction, yielding dihydrofolate (DHF) as a by-product. This enzymatic reaction provides an intracellular de novo source of dTMP, an essential precursor for DNA biosynthesis. This chain is Thymidylate synthase, found in Nocardia farcinica (strain IFM 10152).